Here is a 226-residue protein sequence, read N- to C-terminus: DNA mismatch repair protein MutH (226 aa).

It belongs to the MutH family.

Its subcellular location is the cytoplasm. Its function is as follows. Sequence-specific endonuclease that cleaves unmethylated GATC sequences. It is involved in DNA mismatch repair. The sequence is that of DNA mismatch repair protein MutH from Haemophilus ducreyi (strain 35000HP / ATCC 700724).